The following is a 769-amino-acid chain: 5-methyltetrahydropteroyltriglutamate--homocysteine methyltransferase (769 aa).

5-methyltetrahydropteroyltri-L-glutamate is bound by residues 18 to 21 and Lys127; that span reads RELK. L-homocysteine is bound by residues 447–449 and Glu500; that span reads IGS. L-methionine is bound by residues 447–449 and Glu500; that span reads IGS. 5-methyltetrahydropteroyltri-L-glutamate is bound by residues 531-532 and Trp577; that span reads RC. Residue Asp615 coordinates L-homocysteine. Asp615 contributes to the L-methionine binding site. Glu621 provides a ligand contact to 5-methyltetrahydropteroyltri-L-glutamate. Zn(2+) contacts are provided by His657, Cys659, and Glu681. His710 serves as the catalytic Proton donor. Cys742 contributes to the Zn(2+) binding site.

This sequence belongs to the vitamin-B12 independent methionine synthase family. It depends on Zn(2+) as a cofactor.

The catalysed reaction is 5-methyltetrahydropteroyltri-L-glutamate + L-homocysteine = tetrahydropteroyltri-L-glutamate + L-methionine. Its pathway is amino-acid biosynthesis; L-methionine biosynthesis via de novo pathway; L-methionine from L-homocysteine (MetE route): step 1/1. Its function is as follows. Catalyzes the transfer of a methyl group from 5-methyltetrahydrofolate to homocysteine resulting in methionine formation. In Chelativorans sp. (strain BNC1), this protein is 5-methyltetrahydropteroyltriglutamate--homocysteine methyltransferase.